Consider the following 84-residue polypeptide: Large ribosomal subunit protein bL27 (84 aa).

This sequence belongs to the bacterial ribosomal protein bL27 family.

This Karelsulcia muelleri (strain GWSS) (Sulcia muelleri) protein is Large ribosomal subunit protein bL27.